An 86-amino-acid chain; its full sequence is Large ribosomal subunit protein bL31 (86 aa).

Residues 66-86 (GMGSANSATSKEQKADKDSQK) form a disordered region. The span at 76 to 86 (KEQKADKDSQK) shows a compositional bias: basic and acidic residues.

It belongs to the bacterial ribosomal protein bL31 family. Type A subfamily. As to quaternary structure, part of the 50S ribosomal subunit.

Binds the 23S rRNA. The protein is Large ribosomal subunit protein bL31 of Prochlorococcus marinus (strain MIT 9215).